Here is a 429-residue protein sequence, read N- to C-terminus: Glutamate-1-semialdehyde 2,1-aminomutase (429 aa).

Position 267 is an N6-(pyridoxal phosphate)lysine (K267).

It belongs to the class-III pyridoxal-phosphate-dependent aminotransferase family. HemL subfamily. Homodimer. The cofactor is pyridoxal 5'-phosphate.

It is found in the cytoplasm. It carries out the reaction (S)-4-amino-5-oxopentanoate = 5-aminolevulinate. Its pathway is porphyrin-containing compound metabolism; protoporphyrin-IX biosynthesis; 5-aminolevulinate from L-glutamyl-tRNA(Glu): step 2/2. The protein is Glutamate-1-semialdehyde 2,1-aminomutase of Anaeromyxobacter sp. (strain Fw109-5).